The sequence spans 530 residues: Negative elongation factor A (530 aa).

The region spanning 89–248 is the HDAg domain; the sequence is WVLMVADILK…TPIPPSRTPL (160 aa). The tract at residues 125–188 is NELF-C/D-binding; it reads REKVSECEAS…LQKSTETAQQ (64 aa). Residue T157 is modified to Phosphothreonine. Residues 189–248 form an RNAPII-binding region; that stretch reads LKRSAGVPFHAKGRGLLRKMDTTTPLKGIPKQAPFRSPTTPSVFSPSGNRTPIPPSRTPL. Disordered regions lie at residues 213-248, 266-296, and 312-409; these read PLKGIPKQAPFRSPTTPSVFSPSGNRTPIPPSRTPL, GAGREAKRRRKTLDTEVVEKPTKEETVVENA, and SLNS…TAQT. Phosphoserine occurs at positions 225 and 233. Residues 225–238 are compositionally biased toward polar residues; it reads SPTTPSVFSPSGNR. Phosphothreonine is present on T277. Over residues 277-291 the composition is skewed to basic and acidic residues; the sequence is TLDTEVVEKPTKEET. A compositionally biased stretch (low complexity) spans 315 to 341; that stretch reads SEPTLPSTSYLPSTPSVVPASSYIPSS. Position 363 is a phosphoserine (S363).

Belongs to the NELF-A family. In terms of assembly, the NELF complex is composed of NELFA, NELFB, NELFCD and NELFE; NELFA and NELFCD form a stable subcomplex that binds to the N-terminus of NELFB. In vitro, the NELFA:NELFCD subcomplex binds to ssDNA and ssRNA in a sequence- and structure-dependent manner. Interacts with the RNA polymerase II complex when it is not phosphorylated by P-TEFb. Interacts with NELFB. Ubiquitous. Expressed in brain, heart, spleen, lung, liver, muscle, kidney and testis. Already expressed in 7 dpc embryos.

It localises to the nucleus. Essential component of the NELF complex, a complex that negatively regulates the elongation of transcription by RNA polymerase II. The NELF complex, which acts via an association with the DSIF complex and causes transcriptional pausing, is counteracted by the P-TEFb kinase complex. This chain is Negative elongation factor A (Nelfa), found in Mus musculus (Mouse).